The chain runs to 32 residues: MSDIN-like toxin proprotein 2 (32 aa).

The propeptide occupies 1–10; it reads MSDINATRVP. A cross-link (cyclopeptide (Ala-Pro)) is located at residues 11–17; that stretch reads AWLAECP. The propeptide occupies 18–32; sequence CVGDDISHLLTRGEK.

The protein belongs to the MSDIN fungal toxin family. Processed by the macrocyclase-peptidase enzyme POPB to yield a toxic cyclic heptapeptide. POPB first removes 10 residues from the N-terminus. Conformational trapping of the remaining peptide forces the enzyme to release this intermediate rather than proceed to macrocyclization. The enzyme rebinds the remaining peptide in a different conformation and catalyzes macrocyclization of the N-terminal 7 residues.

Its function is as follows. Probable toxin that belongs to the MSDIN-like toxin family responsible for a large number of food poisoning cases and deaths. In Amanita rimosa, this protein is MSDIN-like toxin proprotein 2.